We begin with the raw amino-acid sequence, 331 residues long: Ribosomal RNA small subunit methyltransferase H (331 aa).

S-adenosyl-L-methionine contacts are provided by residues 38–40 (GGY), aspartate 56, phenylalanine 83, aspartate 100, and glutamine 107. The segment at 287–331 (DEAELAENPRARSARLRVGVRTDAPAGKVDPQALGTPLIPKKGRR) is disordered.

This sequence belongs to the methyltransferase superfamily. RsmH family.

The protein resides in the cytoplasm. It carries out the reaction cytidine(1402) in 16S rRNA + S-adenosyl-L-methionine = N(4)-methylcytidine(1402) in 16S rRNA + S-adenosyl-L-homocysteine + H(+). In terms of biological role, specifically methylates the N4 position of cytidine in position 1402 (C1402) of 16S rRNA. The sequence is that of Ribosomal RNA small subunit methyltransferase H from Cereibacter sphaeroides (strain ATCC 17023 / DSM 158 / JCM 6121 / CCUG 31486 / LMG 2827 / NBRC 12203 / NCIMB 8253 / ATH 2.4.1.) (Rhodobacter sphaeroides).